The following is a 339-amino-acid chain: Anthranilate phosphoribosyltransferase (339 aa).

5-phospho-alpha-D-ribose 1-diphosphate is bound by residues Gly-79, 82 to 83 (GD), Thr-87, 89 to 92 (NIST), 107 to 115 (KHGNRAVSS), and Ser-119. Residue Gly-79 participates in anthranilate binding. A Mg(2+)-binding site is contributed by Ser-91. Residue Asn-110 participates in anthranilate binding. An anthranilate-binding site is contributed by Arg-165. Residues Asp-224 and Glu-225 each contribute to the Mg(2+) site.

This sequence belongs to the anthranilate phosphoribosyltransferase family. Homodimer. The cofactor is Mg(2+).

It catalyses the reaction N-(5-phospho-beta-D-ribosyl)anthranilate + diphosphate = 5-phospho-alpha-D-ribose 1-diphosphate + anthranilate. Its pathway is amino-acid biosynthesis; L-tryptophan biosynthesis; L-tryptophan from chorismate: step 2/5. Its function is as follows. Catalyzes the transfer of the phosphoribosyl group of 5-phosphorylribose-1-pyrophosphate (PRPP) to anthranilate to yield N-(5'-phosphoribosyl)-anthranilate (PRA). In Geobacillus sp. (strain WCH70), this protein is Anthranilate phosphoribosyltransferase.